A 629-amino-acid chain; its full sequence is tRNA uridine 5-carboxymethylaminomethyl modification enzyme MnmG (629 aa).

Residues 13–18 (GGGHAG), Val125, and Ser180 contribute to the FAD site. 273–287 (GPRYCPSIEDKVMRF) lines the NAD(+) pocket. Gln370 contacts FAD.

It belongs to the MnmG family. Homodimer. Heterotetramer of two MnmE and two MnmG subunits. It depends on FAD as a cofactor.

It is found in the cytoplasm. NAD-binding protein involved in the addition of a carboxymethylaminomethyl (cmnm) group at the wobble position (U34) of certain tRNAs, forming tRNA-cmnm(5)s(2)U34. This chain is tRNA uridine 5-carboxymethylaminomethyl modification enzyme MnmG, found in Klebsiella pneumoniae subsp. pneumoniae (strain ATCC 700721 / MGH 78578).